The primary structure comprises 398 residues: Chalcone synthase 1 (398 aa).

58–65 is a binding site for CoA; that stretch reads KFKRMCDK. C167 functions as the Acyl-thioester intermediate in the catalytic mechanism. Residues T200 and 219–220 contribute to the substrate site; that span reads GD. Residue A311 coordinates CoA.

The protein belongs to the thiolase-like superfamily. Chalcone/stilbene synthases family. Homodimer.

The enzyme catalyses (E)-4-coumaroyl-CoA + 3 malonyl-CoA + 3 H(+) = 2',4,4',6'-tetrahydroxychalcone + 3 CO2 + 4 CoA. It participates in secondary metabolite biosynthesis; flavonoid biosynthesis. Its function is as follows. The primary product of this enzyme is 4,2',4',6'-tetrahydroxychalcone (also termed naringenin-chalcone or chalcone) which can under specific conditions spontaneously isomerize into naringenin. The polypeptide is Chalcone synthase 1 (CHS1) (Oryza sativa subsp. japonica (Rice)).